Consider the following 141-residue polypeptide: Ly6/PLAUR domain-containing protein 1 (141 aa).

Positions 1 to 20 are cleaved as a signal peptide; sequence MWVLGIAATFCGLFWLPGLA. Intrachain disulfides connect cysteine 25–cysteine 54, cysteine 28–cysteine 37, cysteine 46–cysteine 71, cysteine 77–cysteine 100, cysteine 88–cysteine 97, and cysteine 101–cysteine 106. The UPAR/Ly6 domain maps to 25 to 107; that stretch reads CYQCEEFQLN…ISCCNTPLCN (83 aa). The N-linked (GlcNAc...) asparagine glycan is linked to asparagine 45. A lipid anchor (GPI-anchor amidated glycine) is attached at glycine 115. The propeptide at 116 to 141 is removed in mature form; that stretch reads SSASAIRPGLLTTLLFFHLALCLAHC.

As to quaternary structure, interacts with CHRNA4 and nAChRs containing alpha-4:beta-2 (CHRNA4:CHRNB2) and alpha-7 (CHRNA7) subunits. As to expression, preferentially expressed in the nervous system. Expressed in embryonic and postnatal postmitotic central and peripheral neurons including subpopulations of motor neurons, sensory neurons, interneurons and neurons of the autonomous nervous system. Expressed around the growing nerves in the limb bud. Expressed at high levels in specific brain regions such as the prefrontal cortex, amygdala, hippocampus, mediodorsal thalamus, dentate gyrus and specific brainstem nuclei (at protein level).

Its subcellular location is the cell membrane. Believed to act as a modulator of nicotinic acetylcholine receptors (nAChRs) activity. In vitro increases receptor desensitization and decreases affinity for ACh of alpha-4:beta-2-containing nAChRs. May play a role in the intracellular trafficking of alpha-4:beta-2 and alpha-7-containing nAChRs and may inhibit their expression at the cell surface. May be involved in the control of anxiety. This chain is Ly6/PLAUR domain-containing protein 1 (Lypd1), found in Mus musculus (Mouse).